Here is a 155-residue protein sequence, read N- to C-terminus: Ribonuclease H (155 aa).

The RNase H type-1 domain maps to 1 to 142 (MLKQVEIFTD…CDELARAAAM (142 aa)). Mg(2+) contacts are provided by Asp10, Glu48, Asp70, and Asp134.

This sequence belongs to the RNase H family. In terms of assembly, monomer. Mg(2+) serves as cofactor.

The protein localises to the cytoplasm. It carries out the reaction Endonucleolytic cleavage to 5'-phosphomonoester.. Its function is as follows. Endonuclease that specifically degrades the RNA of RNA-DNA hybrids. This is Ribonuclease H from Escherichia coli O127:H6 (strain E2348/69 / EPEC).